The following is a 137-amino-acid chain: ATP synthase epsilon chain (137 aa).

It belongs to the ATPase epsilon chain family. As to quaternary structure, F-type ATPases have 2 components, CF(1) - the catalytic core - and CF(0) - the membrane proton channel. CF(1) has five subunits: alpha(3), beta(3), gamma(1), delta(1), epsilon(1). CF(0) has three main subunits: a, b and c.

The protein resides in the cell membrane. Produces ATP from ADP in the presence of a proton gradient across the membrane. This is ATP synthase epsilon chain from Syntrophomonas wolfei subsp. wolfei (strain DSM 2245B / Goettingen).